The primary structure comprises 183 residues: ADP-ribosylation factor-like protein 5 (183 aa).

Residues 27–34, 70–74, and 129–132 contribute to the GTP site; these read GLNAAGKT, DLGGQ, and NKQD.

It belongs to the small GTPase superfamily. Arf family.

Its function is as follows. May bind and exchange GTP and GDP. In Dictyostelium discoideum (Social amoeba), this protein is ADP-ribosylation factor-like protein 5 (arl5).